The following is a 360-amino-acid chain: Ribosomal RNA large subunit methyltransferase M (360 aa).

S-adenosyl-L-methionine is bound by residues S187, 220 to 223 (CPGG), D239, D259, and D276. K305 acts as the Proton acceptor in catalysis.

Belongs to the class I-like SAM-binding methyltransferase superfamily. RNA methyltransferase RlmE family. RlmM subfamily. As to quaternary structure, monomer.

It localises to the cytoplasm. It carries out the reaction cytidine(2498) in 23S rRNA + S-adenosyl-L-methionine = 2'-O-methylcytidine(2498) in 23S rRNA + S-adenosyl-L-homocysteine + H(+). Functionally, catalyzes the 2'-O-methylation at nucleotide C2498 in 23S rRNA. The sequence is that of Ribosomal RNA large subunit methyltransferase M from Photobacterium profundum (strain SS9).